The sequence spans 345 residues: Protein RecA (345 aa).

65–72 (GPESSGKT) is an ATP binding site. A compositionally biased stretch (basic and acidic residues) spans 326–336 (EKFQPAEAARE). A disordered region spans residues 326–345 (EKFQPAEAAREEGDDEGEDE).

The protein belongs to the RecA family.

It is found in the cytoplasm. In terms of biological role, can catalyze the hydrolysis of ATP in the presence of single-stranded DNA, the ATP-dependent uptake of single-stranded DNA by duplex DNA, and the ATP-dependent hybridization of homologous single-stranded DNAs. It interacts with LexA causing its activation and leading to its autocatalytic cleavage. The polypeptide is Protein RecA (Stenotrophomonas maltophilia (strain K279a)).